We begin with the raw amino-acid sequence, 666 residues long: MGQTKSKIKSKYASYLSFIKILLKRGGVKVSTKNLIKLFQIIEQFCPWFPEQGTSDLKDWKRIGKELKQAGRKGNIIPLTVWNDWAIIKAALEPFQTEEDSISVSDAPGSCLIDCNENTRKKSQKETESLHCEYVAEPVMAQSTQNVDYNQLQEVIYPETLKLEGKGPELMGPSESKPRGTSPLPAGQVLVRLQPQKQVKENKTQPQVAYQYWPLAELQYRPPPESQYGYPGMPPAPQGRAPYHQPPTRRLNPMAPPSRQGSELHEIIDKSRKEGDTEAWQFPVTLEPMPPGEGAQEGEPPTVEARYKSFSIKMLKDMKEGVKQYGPNSPYMRTLLDSIAYGHRLIPYDWEILAKSSLSPSQFLQFKTWWIDGVQEQVRRNRAANPPVNIDADQLLGIGQNWSTISQQALMQNEAIEQVRAICLRAWEKIQDPGSTCPSFNTVRQGSKEPYPDFVARLQDVAQKSIADEKAGKVIVELMAYENANPECQSAIKPLKGKVPAGSDVISEYVKACDGIGGAMHKAMLMAQAITGVVLGGQVRTFGGKCYNCGQIGHLKKNCPVLNKQNITIQATTTGREPPDLCPRCKKGKHWASQCRSKFDKNGQPLSGNEQRGQPQAPQQTGAFPIQPFVPQGFQGQQPPLSQVFQGISQLPQYNNCPSPQAAVQQ.

G2 carries the N-myristoyl glycine lipid modification. A disordered region spans residues 164–183 (EGKGPELMGPSESKPRGTSP). 2 CCHC-type zinc fingers span residues 544–561 (GKCY…NCPV) and 580–597 (DLCP…QCRS). Positions 598 to 642 (KFDKNGQPLSGNEQRGQPQAPQQTGAFPIQPFVPQGFQGQQPPLS) are disordered. Polar residues predominate over residues 604–622 (QPLSGNEQRGQPQAPQQTG). A compositionally biased stretch (low complexity) spans 624 to 640 (FPIQPFVPQGFQGQQPP).

Belongs to the beta type-B retroviral Gag protein family. HERV class-II K(HML-2) gag subfamily. In terms of processing, myristoylation is essential for retroviral assembly. Alteration of the glycine residue leads to a block in the budding of particles and an accumulation of Gag inside the cell. Specific enzymatic cleavages may yield mature proteins.

It localises to the cell membrane. Functionally, the products of the Gag polyproteins of infectious retroviruses perform highly complex orchestrated tasks during the assembly, budding, maturation, and infection stages of the viral replication cycle. During viral assembly, the proteins form membrane associations and self-associations that ultimately result in budding of an immature virion from the infected cell. Gag precursors also function during viral assembly to selectively bind and package two plus strands of genomic RNA. Endogenous Gag proteins may have kept, lost or modified their original function during evolution. The protein is Endogenous retrovirus group K member 10 Gag polyprotein (ERVK-10) of Homo sapiens (Human).